The following is a 237-amino-acid chain: Phosphoribosylaminoimidazole-succinocarboxamide synthase (237 aa).

It belongs to the SAICAR synthetase family.

It carries out the reaction 5-amino-1-(5-phospho-D-ribosyl)imidazole-4-carboxylate + L-aspartate + ATP = (2S)-2-[5-amino-1-(5-phospho-beta-D-ribosyl)imidazole-4-carboxamido]succinate + ADP + phosphate + 2 H(+). It participates in purine metabolism; IMP biosynthesis via de novo pathway; 5-amino-1-(5-phospho-D-ribosyl)imidazole-4-carboxamide from 5-amino-1-(5-phospho-D-ribosyl)imidazole-4-carboxylate: step 1/2. The sequence is that of Phosphoribosylaminoimidazole-succinocarboxamide synthase from Serratia proteamaculans (strain 568).